We begin with the raw amino-acid sequence, 288 residues long: Elongation factor Ts (288 aa).

Residues 82–85 (TDFV) form an involved in Mg(2+) ion dislocation from EF-Tu region.

This sequence belongs to the EF-Ts family.

Its subcellular location is the cytoplasm. Functionally, associates with the EF-Tu.GDP complex and induces the exchange of GDP to GTP. It remains bound to the aminoacyl-tRNA.EF-Tu.GTP complex up to the GTP hydrolysis stage on the ribosome. The polypeptide is Elongation factor Ts (Chlorobaculum parvum (strain DSM 263 / NCIMB 8327) (Chlorobium vibrioforme subsp. thiosulfatophilum)).